The following is a 762-amino-acid chain: Acyl-homoserine lactone acylase PvdQ (762 aa).

Residues 1-23 form the signal peptide; the sequence is MGMRTVLTGLAGMLLGSMMPVQA. Residues 194 to 216 constitute a propeptide, spacer peptide; sequence ALSGEQAFQVAEQRRQRFRLERG. Catalysis depends on Ser-217, which acts as the Nucleophile.

This sequence belongs to the peptidase S45 family. Heterodimer of an alpha subunit and a beta subunit processed from the same precursor.

The protein resides in the periplasm. The catalysed reaction is an N-acyl-L-homoserine lactone + H2O = L-homoserine lactone + a carboxylate. Catalyzes the deacylation of acyl-homoserine lactone (AHL or acyl-HSL), releasing homoserine lactone (HSL) and the corresponding fatty acid. Possesses a specificity for the degradation of long-chain acyl-HSLs (side chains of 11 to 14 carbons in length). Degrades 3-oxo-C12-HSL, one of the two main AHL signal molecules of P.aeruginosa, and thereby functions as a quorum quencher, inhibiting the las quorum-sensing system. Therefore, may enable P.aeruginosa to modulate its own quorum-sensing-dependent pathogenic potential. Also appears to be required for pyoverdin biosynthesis. The protein is Acyl-homoserine lactone acylase PvdQ (pvdQ) of Pseudomonas aeruginosa (strain ATCC 15692 / DSM 22644 / CIP 104116 / JCM 14847 / LMG 12228 / 1C / PRS 101 / PAO1).